A 99-amino-acid polypeptide reads, in one-letter code: Ubiquitin-related modifier 1 homolog (99 aa).

Residue glycine 99 is modified to 1-thioglycine. Residue glycine 99 forms a Glycyl lysine isopeptide (Gly-Lys) (interchain with K-? in acceptor proteins) linkage.

This sequence belongs to the URM1 family. In terms of assembly, interacts with cer. Post-translationally, C-terminal thiocarboxylation occurs in 2 steps, it is first acyl-adenylated (-COAMP) via the hesA/moeB/thiF part of the MOCS3 homolog, then thiocarboxylated (-COSH) via the rhodanese domain of the MOCS3 homolog.

Its subcellular location is the cytoplasm. The protein operates within tRNA modification; 5-methoxycarbonylmethyl-2-thiouridine-tRNA biosynthesis. Acts as a sulfur carrier required for 2-thiolation of mcm(5)S(2)U at tRNA wobble positions of cytosolic tRNA(Lys), tRNA(Glu) and tRNA(Gln). Serves as sulfur donor in tRNA 2-thiolation reaction by being thiocarboxylated (-COSH) at its C-terminus by MOCS3. The sulfur is then transferred to tRNA to form 2-thiolation of mcm(5)S(2)U. Also acts as a ubiquitin-like protein (UBL) that is covalently conjugated via an isopeptide bond to lysine residues of target proteins such as Prx2/Jafrac1, Ciao1, Eip71CD and GILT1. The thiocarboxylated form serves as substrate for conjugation and oxidative stress specifically induces the formation of UBL-protein conjugates. The chain is Ubiquitin-related modifier 1 homolog from Drosophila persimilis (Fruit fly).